Here is a 446-residue protein sequence, read N- to C-terminus: RUN domain-containing protein 3A (446 aa).

Positions 1–298 (MEASFVQTTM…LQLQLEEAAA (298 aa)) are interaction with RAP2A. Positions 52-189 (DDSSEEFVNF…IDFSFCLKGE (138 aa)) constitute an RUN domain. Threonine 215 carries the phosphothreonine modification. The segment at 216–239 (DEEERHSAESSTSEDNSPEHPYLP) is disordered. Phosphoserine is present on serine 232. Residues 267-322 (YLEELVRLRESQLKDLEAENRRLQLQLEEAAAQNQREKRELEGVILELQEQLTGLI) adopt a coiled-coil conformation. Over residues 372 to 384 (PLSAEASLSSDSQ) the composition is skewed to polar residues. The tract at residues 372–403 (PLSAEASLSSDSQRLGEAKRDEEPWGPIGKDP) is disordered. Residues 385–394 (RLGEAKRDEE) show a composition bias toward basic and acidic residues. A phosphoserine mark is found at serine 416 and serine 419.

The protein belongs to the RUNDC3 family. As to quaternary structure, interacts with the GTP-bound form of RAP2A. Brain.

In terms of biological role, may act as an effector of RAP2A in neuronal cells. The sequence is that of RUN domain-containing protein 3A (Rundc3a) from Mus musculus (Mouse).